Reading from the N-terminus, the 1446-residue chain is ABC transporter G family member 53 (1446 aa).

The region spanning A153–E426 is the ABC transporter 1 domain. G186–T193 contributes to the ATP binding site. An ABC transmembrane type-2 1 domain is found at E504–F717. Helical transmembrane passes span V523–I543, G555–A575, T610–F630, F641–F661, V666–I686, and I752–L772. Residues I849–E1101 enclose the ABC transporter 2 domain. Residue G894–T901 coordinates ATP. Residues T1174 to F1388 enclose the ABC transmembrane type-2 2 domain. 7 helical membrane-spanning segments follow: residues A1195–V1215, L1225–Q1242, L1281–F1301, F1308–M1328, V1338–I1358, I1363–L1383, and F1415–G1435.

Belongs to the ABC transporter superfamily. ABCG family. PDR (TC 3.A.1.205) subfamily.

The protein localises to the membrane. In terms of biological role, may be a general defense protein. This Oryza sativa subsp. japonica (Rice) protein is ABC transporter G family member 53.